The sequence spans 137 residues: Histone H2B (137 aa).

Positions M1–P10 are enriched in basic and acidic residues. The tract at residues M1 to K45 is disordered. N6-acetyllysine; alternate occurs at positions 8 and 9. Glycyl lysine isopeptide (Lys-Gly) (interchain with G-Cter in SUMO); alternate cross-links involve residues K8 and K9. K13 carries the post-translational modification N6-acetyllysine. Residue K24 is modified to N6-acetyllysine; alternate. A Glycyl lysine isopeptide (Lys-Gly) (interchain with G-Cter in SUMO); alternate cross-link involves residue K24. K25 participates in a covalent cross-link: Glycyl lysine isopeptide (Lys-Gly) (interchain with G-Cter in SUMO). A Glycyl lysine isopeptide (Lys-Gly) (interchain with G-Cter in ubiquitin) cross-link involves residue K131.

This sequence belongs to the histone H2B family. As to quaternary structure, the nucleosome is a histone octamer containing two molecules each of H2A, H2B, H3 and H4 assembled in one H3-H4 heterotetramer and two H2A-H2B heterodimers. The octamer wraps approximately 147 bp of DNA. Post-translationally, monoubiquitinated to form H2BK123ub1. H2BK123ub1 gives a specific tag for epigenetic transcriptional activation and is also prerequisite for H3K4me and H3K79me formation. H2BK123ub1 also modulates the formation of double-strand breaks during meiosis and is a prerequisite for DNA-damage checkpoint activation. In terms of processing, acetylated by GCN5 to form H2BK11ac and H2BK16ac. H2BK16ac can also be formed by ESA1. Acetylation of N-terminal lysines and particularly formation of H2BK11acK16ac has a positive effect on transcription. Sumoylation to form H2BK6su or H2BK7su, and probably also H2BK16su or H2BK17su, occurs preferentially near the telomeres and represses gene transcription.

The protein localises to the nucleus. The protein resides in the chromosome. Its function is as follows. Core component of nucleosome. Nucleosomes wrap and compact DNA into chromatin, limiting DNA accessibility to the cellular machineries which require DNA as a template. Histones thereby play a central role in transcription regulation, DNA repair, DNA replication and chromosomal stability. DNA accessibility is regulated via a complex set of post-translational modifications of histones, also called histone code, and nucleosome remodeling. This Podospora anserina (Pleurage anserina) protein is Histone H2B (HTB1).